Here is a 396-residue protein sequence, read N- to C-terminus: Ribosomal RNA large subunit methyltransferase I (396 aa).

The region spanning 2–79 (SIRIKLKPGR…KEEAIDRDFF (78 aa)) is the PUA domain.

The protein belongs to the methyltransferase superfamily. RlmI family.

Its subcellular location is the cytoplasm. The enzyme catalyses cytidine(1962) in 23S rRNA + S-adenosyl-L-methionine = 5-methylcytidine(1962) in 23S rRNA + S-adenosyl-L-homocysteine + H(+). Specifically methylates the cytosine at position 1962 (m5C1962) of 23S rRNA. This is Ribosomal RNA large subunit methyltransferase I from Shewanella amazonensis (strain ATCC BAA-1098 / SB2B).